The chain runs to 547 residues: 2-succinyl-5-enolpyruvyl-6-hydroxy-3-cyclohexene-1-carboxylate synthase (547 aa).

The protein belongs to the TPP enzyme family. MenD subfamily. Homodimer. Mg(2+) is required as a cofactor. The cofactor is Mn(2+). Thiamine diphosphate serves as cofactor.

The catalysed reaction is isochorismate + 2-oxoglutarate + H(+) = 5-enolpyruvoyl-6-hydroxy-2-succinyl-cyclohex-3-ene-1-carboxylate + CO2. Its pathway is quinol/quinone metabolism; 1,4-dihydroxy-2-naphthoate biosynthesis; 1,4-dihydroxy-2-naphthoate from chorismate: step 2/7. The protein operates within quinol/quinone metabolism; menaquinone biosynthesis. Catalyzes the thiamine diphosphate-dependent decarboxylation of 2-oxoglutarate and the subsequent addition of the resulting succinic semialdehyde-thiamine pyrophosphate anion to isochorismate to yield 2-succinyl-5-enolpyruvyl-6-hydroxy-3-cyclohexene-1-carboxylate (SEPHCHC). The sequence is that of 2-succinyl-5-enolpyruvyl-6-hydroxy-3-cyclohexene-1-carboxylate synthase from Mycobacterium sp. (strain JLS).